A 144-amino-acid chain; its full sequence is Macromomycin (144 aa).

An N-terminal signal peptide occupies residues 1 to 32; the sequence is MLQNTSRFLARAGATVGVAAGLAFSLPADRDG. 2 cysteine pairs are disulfide-bonded: C68–C78 and C120–C125.

This sequence belongs to the neocarzinostatin family.

Binds non-covalently to a chromophore which is the cytotoxic and mutagenic component of the antibiotic. The chromophore binds to DNA as a weak intercalator and causes single- and double-strand breaks. This is Macromomycin from Streptomyces macromomyceticus.